The following is a 353-amino-acid chain: Ribosome biogenesis protein BRX1 homolog (353 aa).

The tract at residues 1–50 (MAATKRKRRGGLEVQAKKPKRSSKDAGQPAKQADVAKEAEEENRDRIPGP) is disordered. Residues 34-47 (DVAKEAEEENRDRI) show a composition bias toward basic and acidic residues. One can recognise a Brix domain in the interval 60 to 249 (ERILIFSSRG…LIKIFQGSFG (190 aa)). Lys-160 is covalently cross-linked (Glycyl lysine isopeptide (Lys-Gly) (interchain with G-Cter in SUMO2)). Ser-261 is subject to Phosphoserine. N6-acetyllysine is present on Lys-276. Residues Lys-314 and Lys-322 each participate in a glycyl lysine isopeptide (Lys-Gly) (interchain with G-Cter in SUMO2) cross-link. Over residues 334-344 (RRIYKRHRKLQ) the composition is skewed to basic residues. The disordered stretch occupies residues 334-353 (RRIYKRHRKLQQKMSRGSAK).

It belongs to the BRX1 family.

It localises to the nucleus. The protein resides in the nucleolus. Required for biogenesis of the 60S ribosomal subunit. This Mus musculus (Mouse) protein is Ribosome biogenesis protein BRX1 homolog (Brix1).